Reading from the N-terminus, the 413-residue chain is Divalent metal cation transporter MntH (413 aa).

The next 11 helical transmembrane spans lie at Leu19 to Ala39, Ala46 to Ile66, Val94 to Ile114, Leu122 to Ile142, Val156 to Gln176, Ala196 to His216, Ile241 to Phe261, Ile290 to Gly310, Ala329 to Leu349, Val350 to Phe370, and Ile389 to Leu409.

Belongs to the NRAMP family.

It localises to the cell inner membrane. Functionally, h(+)-stimulated, divalent metal cation uptake system. In Klebsiella pneumoniae subsp. pneumoniae (strain ATCC 700721 / MGH 78578), this protein is Divalent metal cation transporter MntH.